The primary structure comprises 378 residues: tRNA-specific 2-thiouridylase MnmA (378 aa).

Residues A27–S34 and L53 contribute to the ATP site. The active-site Nucleophile is C121. C121 and C218 are joined by a disulfide. G145 contacts ATP. The segment at R168–Q170 is interaction with tRNA. Residue C218 is the Cysteine persulfide intermediate of the active site.

Belongs to the MnmA/TRMU family.

It is found in the cytoplasm. It carries out the reaction S-sulfanyl-L-cysteinyl-[protein] + uridine(34) in tRNA + AH2 + ATP = 2-thiouridine(34) in tRNA + L-cysteinyl-[protein] + A + AMP + diphosphate + H(+). Its function is as follows. Catalyzes the 2-thiolation of uridine at the wobble position (U34) of tRNA, leading to the formation of s(2)U34. The sequence is that of tRNA-specific 2-thiouridylase MnmA from Rhizorhabdus wittichii (strain DSM 6014 / CCUG 31198 / JCM 15750 / NBRC 105917 / EY 4224 / RW1) (Sphingomonas wittichii).